The chain runs to 100 residues: Large ribosomal subunit protein uL23 (100 aa).

The protein belongs to the universal ribosomal protein uL23 family. As to quaternary structure, part of the 50S ribosomal subunit. Contacts protein L29, and trigger factor when it is bound to the ribosome.

Its function is as follows. One of the early assembly proteins it binds 23S rRNA. One of the proteins that surrounds the polypeptide exit tunnel on the outside of the ribosome. Forms the main docking site for trigger factor binding to the ribosome. The chain is Large ribosomal subunit protein uL23 from Proteus mirabilis (strain HI4320).